Reading from the N-terminus, the 66-residue chain is MSQPLTVDCPTCGAPVEWSEKNAFRPFCSDRCKLIDLGAWAAEEHKIAGSEESEDELYSGDLEPRH.

Positions 9, 12, 28, and 32 each coordinate Zn(2+). The tract at residues 45–66 (HKIAGSEESEDELYSGDLEPRH) is disordered.

It belongs to the DNA gyrase inhibitor YacG family. In terms of assembly, interacts with GyrB. Zn(2+) is required as a cofactor.

Functionally, inhibits all the catalytic activities of DNA gyrase by preventing its interaction with DNA. Acts by binding directly to the C-terminal domain of GyrB, which probably disrupts DNA binding by the gyrase. The polypeptide is DNA gyrase inhibitor YacG (Pseudomonas putida (strain ATCC 47054 / DSM 6125 / CFBP 8728 / NCIMB 11950 / KT2440)).